The sequence spans 119 residues: Ribonuclease P protein component (119 aa).

The protein belongs to the RnpA family. Consists of a catalytic RNA component (M1 or rnpB) and a protein subunit.

It catalyses the reaction Endonucleolytic cleavage of RNA, removing 5'-extranucleotides from tRNA precursor.. In terms of biological role, RNaseP catalyzes the removal of the 5'-leader sequence from pre-tRNA to produce the mature 5'-terminus. It can also cleave other RNA substrates such as 4.5S RNA. The protein component plays an auxiliary but essential role in vivo by binding to the 5'-leader sequence and broadening the substrate specificity of the ribozyme. The protein is Ribonuclease P protein component of Pediococcus pentosaceus (strain ATCC 25745 / CCUG 21536 / LMG 10740 / 183-1w).